The chain runs to 445 residues: tRNA modification GTPase MnmE (445 aa).

Arg-20, Glu-79, and Lys-119 together coordinate (6S)-5-formyl-5,6,7,8-tetrahydrofolate. One can recognise a TrmE-type G domain in the interval 215 to 371 (GLKLAIIGPP…ILKNIENIAE (157 aa)). Asn-225 lines the K(+) pocket. Residues 225 to 230 (NVGKSS), 244 to 250 (SNIAGTT), and 269 to 272 (DTAG) contribute to the GTP site. Position 229 (Ser-229) interacts with Mg(2+). K(+) is bound by residues Ser-244, Ile-246, and Thr-249. A Mg(2+)-binding site is contributed by Thr-250. Lys-445 provides a ligand contact to (6S)-5-formyl-5,6,7,8-tetrahydrofolate.

The protein belongs to the TRAFAC class TrmE-Era-EngA-EngB-Septin-like GTPase superfamily. TrmE GTPase family. Homodimer. Heterotetramer of two MnmE and two MnmG subunits. The cofactor is K(+).

Its subcellular location is the cytoplasm. Its function is as follows. Exhibits a very high intrinsic GTPase hydrolysis rate. Involved in the addition of a carboxymethylaminomethyl (cmnm) group at the wobble position (U34) of certain tRNAs, forming tRNA-cmnm(5)s(2)U34. The polypeptide is tRNA modification GTPase MnmE (Rickettsia conorii (strain ATCC VR-613 / Malish 7)).